Reading from the N-terminus, the 718-residue chain is Centromere/kinetochore protein zw10 (718 aa).

The protein belongs to the ZW10 family.

Its subcellular location is the cytoplasm. The protein localises to the nucleus. The protein resides in the chromosome. It localises to the centromere. It is found in the kinetochore. In terms of biological role, required for accurate chromosome segregation. The polypeptide is Centromere/kinetochore protein zw10 (mit(1)15) (Drosophila pseudoobscura pseudoobscura (Fruit fly)).